The sequence spans 224 residues: Biosynthetic peptidoglycan transglycosylase (224 aa).

Residues Ile12 to Val32 form a helical membrane-spanning segment.

Belongs to the glycosyltransferase 51 family.

The protein resides in the cell inner membrane. It catalyses the reaction [GlcNAc-(1-&gt;4)-Mur2Ac(oyl-L-Ala-gamma-D-Glu-L-Lys-D-Ala-D-Ala)](n)-di-trans,octa-cis-undecaprenyl diphosphate + beta-D-GlcNAc-(1-&gt;4)-Mur2Ac(oyl-L-Ala-gamma-D-Glu-L-Lys-D-Ala-D-Ala)-di-trans,octa-cis-undecaprenyl diphosphate = [GlcNAc-(1-&gt;4)-Mur2Ac(oyl-L-Ala-gamma-D-Glu-L-Lys-D-Ala-D-Ala)](n+1)-di-trans,octa-cis-undecaprenyl diphosphate + di-trans,octa-cis-undecaprenyl diphosphate + H(+). It functions in the pathway cell wall biogenesis; peptidoglycan biosynthesis. In terms of biological role, peptidoglycan polymerase that catalyzes glycan chain elongation from lipid-linked precursors. This is Biosynthetic peptidoglycan transglycosylase from Brucella melitensis biotype 1 (strain ATCC 23456 / CCUG 17765 / NCTC 10094 / 16M).